Here is a 251-residue protein sequence, read N- to C-terminus: MILYEYPFNERIRTLLRLEDLFERFTFFVAQEDAREHHVALTTLFEISEVAGRADLKSDLMKELERQRQTLAPFRGNPGIEQNALEAVLGEIEQTLANLAQMQGKTGQHLIDNEWLASIRSRAVIPGGTCKFDLPSYYAWQQWPAEQRRHDIAKWAMPLLPLRDAAMIVLRLARESGQASKVMAMQGSYQQMLSGRTYQLMQVRVPPELRVIPEASANKYMLWVRFTAQDGDVRPRAVDIDVPFQLTLCNL.

It belongs to the ZapD family. Interacts with FtsZ.

It is found in the cytoplasm. Cell division factor that enhances FtsZ-ring assembly. Directly interacts with FtsZ and promotes bundling of FtsZ protofilaments, with a reduction in FtsZ GTPase activity. This Burkholderia mallei (strain NCTC 10247) protein is Cell division protein ZapD.